The sequence spans 104 residues: MNTSVPTSVPTNQSVWGNVSTGLDALISGWARVEQIKAAKASTGQGRVEQAMTPELDNGAAVVVEAPKKAAQPSETLVFGVPQKTLLLGFGGLLVLGLVMRGNK.

Residues leucine 77–valine 99 traverse the membrane as a helical segment.

In terms of assembly, homodimer.

The protein localises to the virion membrane. This Pseudoalteromonas phage PM2 (Bacteriophage PM2) protein is Protein P3 (III).